Reading from the N-terminus, the 178-residue chain is Dual-action ribosomal maturation protein DarP (178 aa).

A compositionally biased stretch (polar residues) spans 1–14 (MTVSDHPQTVSQPD). A disordered region spans residues 1-25 (MTVSDHPQTVSQPDPESESRPSKTR).

This sequence belongs to the DarP family.

The protein localises to the cytoplasm. In terms of biological role, member of a network of 50S ribosomal subunit biogenesis factors which assembles along the 30S-50S interface, preventing incorrect 23S rRNA structures from forming. Promotes peptidyl transferase center (PTC) maturation. The polypeptide is Dual-action ribosomal maturation protein DarP (Nitrosomonas europaea (strain ATCC 19718 / CIP 103999 / KCTC 2705 / NBRC 14298)).